The chain runs to 262 residues: Glucosamine-6-phosphate deaminase (262 aa).

Asp63 (proton acceptor; for enolization step) is an active-site residue. The For ring-opening step role is filled by Asn129. His131 functions as the Proton acceptor; for ring-opening step in the catalytic mechanism. Glu136 acts as the For ring-opening step in catalysis.

It belongs to the glucosamine/galactosamine-6-phosphate isomerase family. NagB subfamily.

The catalysed reaction is alpha-D-glucosamine 6-phosphate + H2O = beta-D-fructose 6-phosphate + NH4(+). The protein operates within amino-sugar metabolism; N-acetylneuraminate degradation; D-fructose 6-phosphate from N-acetylneuraminate: step 5/5. Its function is as follows. Catalyzes the reversible isomerization-deamination of glucosamine 6-phosphate (GlcN6P) to form fructose 6-phosphate (Fru6P) and ammonium ion. The protein is Glucosamine-6-phosphate deaminase of Bacillus cytotoxicus (strain DSM 22905 / CIP 110041 / 391-98 / NVH 391-98).